The chain runs to 519 residues: 6-phosphofructo-2-kinase/fructose-2,6-bisphosphatase 2 (519 aa).

Residues Met-1 to Tyr-17 are compositionally biased toward polar residues. Positions Met-1–Ser-22 are disordered. At Ser-2 the chain carries N-acetylserine. A 6-phosphofructo-2-kinase region spans residues Ser-2 to His-251. Phosphoserine; by PKA is present on Ser-32. Gly-48–Tyr-56 serves as a coordination point for ATP. Beta-D-fructose 6-phosphate is bound by residues Arg-81 and Arg-105. Asp-131 is an active-site residue. Residues Thr-133 and Arg-139 each contribute to the beta-D-fructose 6-phosphate site. Cys-161 is a catalytic residue. An ATP-binding site is contributed by Asn-170 to Lys-175. The beta-D-fructose 6-phosphate site is built by Lys-175, Arg-196, and Tyr-200. Residues Pro-252–Val-519 form a fructose-2,6-bisphosphatase region. Beta-D-fructose 2,6-bisphosphate is bound at residue Arg-259. His-260 serves as the catalytic Tele-phosphohistidine intermediate. Positions 266 and 272 each coordinate beta-D-fructose 2,6-bisphosphate. Glu-329 acts as the Proton donor/acceptor in catalysis. Beta-D-fructose 2,6-bisphosphate is bound by residues Tyr-340, Arg-354, Lys-358, Tyr-369, Gln-395, and Arg-399. Phe-351–Arg-354 is an ATP binding site. ATP is bound by residues Gln-395–Arg-399 and Tyr-431. Residues His-448–Lys-493 are disordered. Residues Phe-456 to Ile-479 are compositionally biased toward polar residues. Ser-469 is subject to Phosphoserine. Thr-471 carries the post-translational modification Phosphothreonine. Thr-478 carries the post-translational modification Phosphothreonine; by PKC. 2 positions are modified to phosphoserine: Ser-486 and Ser-496. A disordered region spans residues Ala-500–Val-519. Positions Pro-510–Val-519 are enriched in polar residues.

In the C-terminal section; belongs to the phosphoglycerate mutase family. Homodimer. Forms a heterodimer with PFKFB3. Post-translationally, phosphorylation by AMPK stimulates activity. In terms of tissue distribution, highest levels in kidney; also found in heart, brain, spleen, lung, liver, skeletal muscle and testis.

The catalysed reaction is beta-D-fructose 2,6-bisphosphate + H2O = beta-D-fructose 6-phosphate + phosphate. It catalyses the reaction beta-D-fructose 6-phosphate + ATP = beta-D-fructose 2,6-bisphosphate + ADP + H(+). Phosphorylation results in the activation of the kinase activity. Synthesis and degradation of fructose 2,6-bisphosphate. This Mus musculus (Mouse) protein is 6-phosphofructo-2-kinase/fructose-2,6-bisphosphatase 2 (Pfkfb2).